Reading from the N-terminus, the 301-residue chain is Porin (301 aa).

As to quaternary structure, homotrimer.

The protein resides in the cell outer membrane. Its function is as follows. Forms channels that allow the passive diffusion of small hydrophilic solutes up to an exclusion limit of about 0.6 kDa. In Rhodobacter capsulatus (Rhodopseudomonas capsulata), this protein is Porin.